Here is an 85-residue protein sequence, read N- to C-terminus: uncharacterized protein (85 aa).

Belongs to the YciI family.

This is an uncharacterized protein from Bacillus subtilis (strain 168).